A 185-amino-acid polypeptide reads, in one-letter code: Ribosome-recycling factor (185 aa).

The disordered stretch occupies residues 128 to 158; that stretch reads VRNTRQDANNKVKKLEKDKEISEDESKKAQE.

Belongs to the RRF family.

It is found in the cytoplasm. Functionally, responsible for the release of ribosomes from messenger RNA at the termination of protein biosynthesis. May increase the efficiency of translation by recycling ribosomes from one round of translation to another. The sequence is that of Ribosome-recycling factor from Helicobacter pylori (strain J99 / ATCC 700824) (Campylobacter pylori J99).